The following is a 368-amino-acid chain: tRNA-specific 2-thiouridylase MnmA (368 aa).

ATP contacts are provided by residues 11–18 (GMSGGVDS) and Met37. The segment at 97–99 (NPD) is interaction with target base in tRNA. Cys102 (nucleophile) is an active-site residue. The cysteines at positions 102 and 199 are disulfide-linked. An ATP-binding site is contributed by Gly127. Positions 149-151 (KDQ) are interaction with tRNA. Cys199 serves as the catalytic Cysteine persulfide intermediate. The interaction with tRNA stretch occupies residues 311 to 312 (RY).

This sequence belongs to the MnmA/TRMU family. Interacts with TusE.

Its subcellular location is the cytoplasm. It catalyses the reaction S-sulfanyl-L-cysteinyl-[protein] + uridine(34) in tRNA + AH2 + ATP = 2-thiouridine(34) in tRNA + L-cysteinyl-[protein] + A + AMP + diphosphate + H(+). In terms of biological role, catalyzes the 2-thiolation of uridine at the wobble position (U34) of tRNA(Lys), tRNA(Glu) and tRNA(Gln), leading to the formation of s(2)U34, the first step of tRNA-mnm(5)s(2)U34 synthesis. Sulfur is provided by IscS, via a sulfur-relay system. Binds ATP and its substrate tRNAs. This chain is tRNA-specific 2-thiouridylase MnmA, found in Escherichia coli (strain SMS-3-5 / SECEC).